Reading from the N-terminus, the 159-residue chain is Ribosomal RNA large subunit methyltransferase H (159 aa).

S-adenosyl-L-methionine is bound by residues L76, G107, and 126-131; that span reads ISSLTL.

It belongs to the RNA methyltransferase RlmH family. As to quaternary structure, homodimer.

The protein resides in the cytoplasm. The enzyme catalyses pseudouridine(1915) in 23S rRNA + S-adenosyl-L-methionine = N(3)-methylpseudouridine(1915) in 23S rRNA + S-adenosyl-L-homocysteine + H(+). Specifically methylates the pseudouridine at position 1915 (m3Psi1915) in 23S rRNA. The chain is Ribosomal RNA large subunit methyltransferase H from Cupriavidus metallidurans (strain ATCC 43123 / DSM 2839 / NBRC 102507 / CH34) (Ralstonia metallidurans).